Here is a 210-residue protein sequence, read N- to C-terminus: Adenylate kinase (210 aa).

Residue 10-15 participates in ATP binding; the sequence is GSGKGT. The interval 30–54 is NMP; it reads SCGDILRKQNKCCDINKLIKKGELI. Residues Arg36, 52–54, 80–83, and Gln87 each bind AMP; these read ELI and GFPR. Positions 117–154 are LID; it reads GRIIDKVSGEIYHLKFNPPKFITEKSNKNKILVRRLDD. Residues Arg118 and 127 to 128 contribute to the ATP site; that span reads IY. AMP contacts are provided by Arg151 and Arg162. ATP is bound at residue Phe195.

This sequence belongs to the adenylate kinase family. Monomer.

Its subcellular location is the cytoplasm. The enzyme catalyses AMP + ATP = 2 ADP. Its pathway is purine metabolism; AMP biosynthesis via salvage pathway; AMP from ADP: step 1/1. Catalyzes the reversible transfer of the terminal phosphate group between ATP and AMP. Plays an important role in cellular energy homeostasis and in adenine nucleotide metabolism. The chain is Adenylate kinase from Wigglesworthia glossinidia brevipalpis.